The primary structure comprises 141 residues: Nucleoside diphosphate kinase (141 aa).

Residues K11, F59, R87, T93, R104, and N114 each contribute to the ATP site. The Pros-phosphohistidine intermediate role is filled by H117.

This sequence belongs to the NDK family. As to quaternary structure, homotetramer. Mg(2+) is required as a cofactor.

It is found in the cytoplasm. The enzyme catalyses a 2'-deoxyribonucleoside 5'-diphosphate + ATP = a 2'-deoxyribonucleoside 5'-triphosphate + ADP. It catalyses the reaction a ribonucleoside 5'-diphosphate + ATP = a ribonucleoside 5'-triphosphate + ADP. Functionally, major role in the synthesis of nucleoside triphosphates other than ATP. The ATP gamma phosphate is transferred to the NDP beta phosphate via a ping-pong mechanism, using a phosphorylated active-site intermediate. The protein is Nucleoside diphosphate kinase of Acidovorax ebreus (strain TPSY) (Diaphorobacter sp. (strain TPSY)).